Here is a 175-residue protein sequence, read N- to C-terminus: ATP synthase subunit d, mitochondrial (175 aa).

Position 2 is an N-acetylserine (Ser2).

It belongs to the ATPase d subunit family.

The protein localises to the mitochondrion inner membrane. In terms of biological role, mitochondrial membrane ATP synthase (F(1)F(0) ATP synthase or Complex V) produces ATP from ADP in the presence of a proton gradient across the membrane which is generated by electron transport complexes of the respiratory chain. F-type ATPases consist of two structural domains, F(1) - containing the extramembraneous catalytic core, and F(0) - containing the membrane proton channel, linked together by a central stalk and a peripheral stalk. During catalysis, ATP synthesis in the catalytic domain of F(1) is coupled via a rotary mechanism of the central stalk subunits to proton translocation. Part of the complex F(0) domain and the peripheric stalk, which acts as a stator to hold the catalytic alpha(3)beta(3) subcomplex and subunit a/ATP6 static relative to the rotary elements. This is ATP synthase subunit d, mitochondrial (atp7) from Schizosaccharomyces pombe (strain 972 / ATCC 24843) (Fission yeast).